Reading from the N-terminus, the 278-residue chain is Ribosomal RNA small subunit methyltransferase A (278 aa).

Positions 28, 30, 55, 77, 103, and 122 each coordinate S-adenosyl-L-methionine.

It belongs to the class I-like SAM-binding methyltransferase superfamily. rRNA adenine N(6)-methyltransferase family. RsmA subfamily.

The protein localises to the cytoplasm. It catalyses the reaction adenosine(1518)/adenosine(1519) in 16S rRNA + 4 S-adenosyl-L-methionine = N(6)-dimethyladenosine(1518)/N(6)-dimethyladenosine(1519) in 16S rRNA + 4 S-adenosyl-L-homocysteine + 4 H(+). Functionally, specifically dimethylates two adjacent adenosines (A1518 and A1519) in the loop of a conserved hairpin near the 3'-end of 16S rRNA in the 30S particle. May play a critical role in biogenesis of 30S subunits. The sequence is that of Ribosomal RNA small subunit methyltransferase A from Cereibacter sphaeroides (strain ATCC 17023 / DSM 158 / JCM 6121 / CCUG 31486 / LMG 2827 / NBRC 12203 / NCIMB 8253 / ATH 2.4.1.) (Rhodobacter sphaeroides).